Reading from the N-terminus, the 380-residue chain is L-lactate dehydrogenase (380 aa).

The FMN hydroxy acid dehydrogenase domain occupies 1 to 380; the sequence is MIISSASDYR…DASILVKAVA (380 aa). Residue Y24 participates in substrate binding. S106 and Q127 together coordinate FMN. Y129 contacts substrate. FMN is bound at residue T155. Position 164 (R164) interacts with substrate. K251 serves as a coordination point for FMN. H275 acts as the Proton acceptor in catalysis. Residue R278 participates in substrate binding. Residue 306–330 coordinates FMN; that stretch reads DSGIRSGLDVVRMLALGAKGVLLGR.

It belongs to the FMN-dependent alpha-hydroxy acid dehydrogenase family. As to quaternary structure, homotetramer. Requires FMN as cofactor.

It is found in the cell inner membrane. It catalyses the reaction (S)-lactate + A = pyruvate + AH2. Its function is as follows. Catalyzes the conversion of L-lactate to pyruvate. Is coupled to the respiratory chain. This chain is L-lactate dehydrogenase, found in Pseudomonas syringae pv. syringae (strain B728a).